The chain runs to 147 residues: MENKFDHMKLENQLCFLLYASSREMTKQYKPLLDKLNITYPQYLALLLLWEHETLTVKKMGEQLYLDSGTLTPMLKRMEQQGLITRKRSEEDERSVLISLTEDGALLKEKAVDIPGTILGLSKQSGEDLKQLKSALYTLLETLHQKN.

The HTH marR-type domain maps to 11–141; it reads ENQLCFLLYA…LKSALYTLLE (131 aa). Cysteine sulfenic acid (-SOH); alternate is present on Cys15. S-bacillithiol cysteine disulfide; alternate is present on Cys15. Cys15 is subject to S-cysteinyl cysteine; alternate. A cross-link (n,N-(cysteine-1,S-diyl)phenylalanine (Cys-Phe); alternate) is located at residues 15–16; that stretch reads CF. Residues 57-80 constitute a DNA-binding region (H-T-H motif); the sequence is VKKMGEQLYLDSGTLTPMLKRMEQ.

Homodimer. Post-translationally, cys-15 is oxidized by organic peroxides to cysteine sulfenic acid (Cys-SOH). This can react with the alpha-amido of the following residue to form the sulfenamide cross-link. Oxidation or cross-linking results in the loss of DNA-binding activity and the inactivation of repressor function. Both the cysteine sulfenic acid and the sulfenamide cross-link can react with free cysteine or bacillithiol (BSH) to form mixed disulfides. Further reduction of OhrR by free sulfhydryl compounds restores repressor activity.

The protein localises to the cytoplasm. With respect to regulation, inactivated by oxidation of Cys-15 to a sulfenic acid. Organic peroxide sensor. Represses the expression of the peroxide-inducible gene ohrA by cooperative binding to two inverted repeat elements. The protein is Organic hydroperoxide resistance transcriptional regulator (ohrR) of Bacillus subtilis (strain 168).